The following is a 610-amino-acid chain: Glutamine--fructose-6-phosphate aminotransferase [isomerizing] (610 aa).

The active-site Nucleophile; for GATase activity is the Cys-2. Residues 2 to 219 (CGIVGAVAQR…EGDVAEITRR (218 aa)) form the Glutamine amidotransferase type-2 domain. SIS domains are found at residues 287–427 (ADEL…LRGM) and 459–600 (LAEG…VDQP). The active-site For Fru-6P isomerization activity is the Lys-605.

Homodimer.

Its subcellular location is the cytoplasm. It carries out the reaction D-fructose 6-phosphate + L-glutamine = D-glucosamine 6-phosphate + L-glutamate. Catalyzes the first step in hexosamine metabolism, converting fructose-6P into glucosamine-6P using glutamine as a nitrogen source. The protein is Glutamine--fructose-6-phosphate aminotransferase [isomerizing] of Pectobacterium atrosepticum (strain SCRI 1043 / ATCC BAA-672) (Erwinia carotovora subsp. atroseptica).